The primary structure comprises 37 residues: Mau operon transcriptional activator (37 aa).

This sequence belongs to the LysR transcriptional regulatory family.

Functionally, transcriptional activator of the mau genes involved in methylamine metabolism. The protein is Mau operon transcriptional activator (mauR) of Paracoccus versutus (Thiobacillus versutus).